We begin with the raw amino-acid sequence, 302 residues long: Glutaminase (302 aa).

Positions 61, 111, 155, 162, 186, 238, and 256 each coordinate substrate.

It belongs to the glutaminase family. As to quaternary structure, homotetramer.

The catalysed reaction is L-glutamine + H2O = L-glutamate + NH4(+). The sequence is that of Glutaminase from Pseudomonas putida (strain ATCC 700007 / DSM 6899 / JCM 31910 / BCRC 17059 / LMG 24140 / F1).